Consider the following 270-residue polypeptide: Formamidopyrimidine-DNA glycosylase (270 aa).

Pro-2 serves as the catalytic Schiff-base intermediate with DNA. Glu-3 acts as the Proton donor in catalysis. Lys-57 serves as the catalytic Proton donor; for beta-elimination activity. The DNA site is built by His-90, Arg-109, and Arg-151. The segment at 236–270 (QVYGRGGKLCMVCSNRLKEVRLGQRSTVYCTQCQR) adopts an FPG-type zinc-finger fold. Arg-260 serves as the catalytic Proton donor; for delta-elimination activity.

Belongs to the FPG family. In terms of assembly, monomer. The cofactor is Zn(2+).

The catalysed reaction is Hydrolysis of DNA containing ring-opened 7-methylguanine residues, releasing 2,6-diamino-4-hydroxy-5-(N-methyl)formamidopyrimidine.. The enzyme catalyses 2'-deoxyribonucleotide-(2'-deoxyribose 5'-phosphate)-2'-deoxyribonucleotide-DNA = a 3'-end 2'-deoxyribonucleotide-(2,3-dehydro-2,3-deoxyribose 5'-phosphate)-DNA + a 5'-end 5'-phospho-2'-deoxyribonucleoside-DNA + H(+). Its function is as follows. Involved in base excision repair of DNA damaged by oxidation or by mutagenic agents. Acts as a DNA glycosylase that recognizes and removes damaged bases. Has a preference for oxidized purines, such as 7,8-dihydro-8-oxoguanine (8-oxoG). Has AP (apurinic/apyrimidinic) lyase activity and introduces nicks in the DNA strand. Cleaves the DNA backbone by beta-delta elimination to generate a single-strand break at the site of the removed base with both 3'- and 5'-phosphates. This chain is Formamidopyrimidine-DNA glycosylase, found in Idiomarina loihiensis (strain ATCC BAA-735 / DSM 15497 / L2-TR).